Consider the following 296-residue polypeptide: Ribosomal RNA small subunit methyltransferase H (296 aa).

Residues 30–32 (GGH), Asp49, Phe76, Asp97, and Gln104 contribute to the S-adenosyl-L-methionine site.

The protein belongs to the methyltransferase superfamily. RsmH family.

It localises to the cytoplasm. The enzyme catalyses cytidine(1402) in 16S rRNA + S-adenosyl-L-methionine = N(4)-methylcytidine(1402) in 16S rRNA + S-adenosyl-L-homocysteine + H(+). Specifically methylates the N4 position of cytidine in position 1402 (C1402) of 16S rRNA. This is Ribosomal RNA small subunit methyltransferase H from Mesomycoplasma hyopneumoniae (strain 7448) (Mycoplasma hyopneumoniae).